Here is a 92-residue protein sequence, read N- to C-terminus: Acylphosphatase (92 aa).

Residues 5–92 form the Acylphosphatase-like domain; that stretch reads RAHVVVSGKV…GEFSGFKIAF (88 aa). Active-site residues include R20 and N38.

The protein belongs to the acylphosphatase family.

The catalysed reaction is an acyl phosphate + H2O = a carboxylate + phosphate + H(+). In Pelotomaculum thermopropionicum (strain DSM 13744 / JCM 10971 / SI), this protein is Acylphosphatase (acyP).